Here is a 310-residue protein sequence, read N- to C-terminus: MDDDIFKEARKERDDFEELMNACDLAKMSVKNNEMVHGLETFGINGESSENGNKEKPKEIMKVVAPTVEAYVGSSSAQTPTKSSGGALDGSDQQEVRQDGTSVQKDDNGFVFYKCRFCGLTFNFMNTLRAHERIHDVSQPYVCGKCGDSFEFACQLEYHAAQHSEIDGYKCECGRTFFSYTEMLYHKHTDDPLELIGAPETTTIKVSKKRVLPVSEQDLPQPAFVTEGYEPKHPLRVYNDVRSKPYICEYCSKSYSDSRGLAYHMYSHRGEKYFNPRASRYMMGREGVGYTDSRSYYLFPRTSGYVTPRF.

Positions 73–84 (GSSSAQTPTKSS) are enriched in polar residues. A disordered region spans residues 73–102 (GSSSAQTPTKSSGGALDGSDQQEVRQDGTS). C2H2-type zinc fingers lie at residues 113 to 135 (YKCR…ERIH) and 141 to 163 (YVCG…AAQH). The segment at 169–188 (YKCECGRTFFSYTEMLYHKH) adopts a C2H2-type 3; degenerate zinc-finger fold. The segment at 198–310 (APETTTIKVS…RTSGYVTPRF (113 aa)) is interaction with myo-3. The segment at 246–268 (YICEYCSKSYSDSRGLAYHMYSH) adopts a C2H2-type 4 zinc-finger fold.

As to quaternary structure, interacts with hum-6, mep-1, myo-3, unc-96 and unc-97/PINCH. As to expression, expressed in embryos from 1.5- to 2-fold stage in myofibrils. In larvae and adults, it is expressed in body wall muscle, and in addition, anal depressor muscle and vulval muscles. More specifically it is found in the thick filaments of muscle fibers.

It localises to the nucleus. The protein localises to the cytoplasm. Probable transcription factor required for muscle structure. Its dual subcellular localization suggests that it may function both as a muscle adhesion complex protein and as a transcription factor, or work together with transcription factors, to influence gene expression. Thought to act as a molecular bridge between unc-97 and myo-3 at the M-line of muscles, possibly in a signaling role. Plays a role in the formation of muscle connections, also called muscle arm extensions, between the body wall and the motor axons in the dorsal and ventral cord. The polypeptide is Zinc finger protein unc-98 (unc-98) (Caenorhabditis elegans).